The chain runs to 499 residues: Probable cytosol aminopeptidase (499 aa).

Residues K267 and D272 each coordinate Mn(2+). Residue K279 is part of the active site. The Mn(2+) site is built by D290, D349, and E351. The active site involves R353.

This sequence belongs to the peptidase M17 family. Mn(2+) serves as cofactor.

The protein localises to the cytoplasm. The catalysed reaction is Release of an N-terminal amino acid, Xaa-|-Yaa-, in which Xaa is preferably Leu, but may be other amino acids including Pro although not Arg or Lys, and Yaa may be Pro. Amino acid amides and methyl esters are also readily hydrolyzed, but rates on arylamides are exceedingly low.. It carries out the reaction Release of an N-terminal amino acid, preferentially leucine, but not glutamic or aspartic acids.. Functionally, presumably involved in the processing and regular turnover of intracellular proteins. Catalyzes the removal of unsubstituted N-terminal amino acids from various peptides. The protein is Probable cytosol aminopeptidase of Buchnera aphidicola subsp. Acyrthosiphon pisum (strain Tuc7).